Consider the following 140-residue polypeptide: Putative pre-16S rRNA nuclease (140 aa).

It belongs to the YqgF nuclease family.

The protein localises to the cytoplasm. Its function is as follows. Could be a nuclease involved in processing of the 5'-end of pre-16S rRNA. The polypeptide is Putative pre-16S rRNA nuclease (Parabacteroides distasonis (strain ATCC 8503 / DSM 20701 / CIP 104284 / JCM 5825 / NCTC 11152)).